Consider the following 277-residue polypeptide: Probable endonuclease 4 (277 aa).

Positions 70, 108, 143, 176, 179, 210, 223, 225, and 255 each coordinate Zn(2+).

The protein belongs to the AP endonuclease 2 family. Zn(2+) serves as cofactor.

It carries out the reaction Endonucleolytic cleavage to 5'-phosphooligonucleotide end-products.. Its function is as follows. Endonuclease IV plays a role in DNA repair. It cleaves phosphodiester bonds at apurinic or apyrimidinic (AP) sites, generating a 3'-hydroxyl group and a 5'-terminal sugar phosphate. The protein is Probable endonuclease 4 of Mycoplasmopsis synoviae (strain 53) (Mycoplasma synoviae).